The following is a 318-amino-acid chain: Lipoyl synthase 1 (318 aa).

Residues 6–32 (DTISNPLRPRHPEKVNRPDSASPPKPD) form a disordered region. Cys-60, Cys-65, Cys-71, Cys-86, Cys-90, Cys-93, and Ser-299 together coordinate [4Fe-4S] cluster. One can recognise a Radical SAM core domain in the interval 72–288 (WDKKHATFMI…EKVAYTKGFL (217 aa)).

This sequence belongs to the radical SAM superfamily. Lipoyl synthase family. [4Fe-4S] cluster serves as cofactor.

The protein resides in the cytoplasm. It catalyses the reaction [[Fe-S] cluster scaffold protein carrying a second [4Fe-4S](2+) cluster] + N(6)-octanoyl-L-lysyl-[protein] + 2 oxidized [2Fe-2S]-[ferredoxin] + 2 S-adenosyl-L-methionine + 4 H(+) = [[Fe-S] cluster scaffold protein] + N(6)-[(R)-dihydrolipoyl]-L-lysyl-[protein] + 4 Fe(3+) + 2 hydrogen sulfide + 2 5'-deoxyadenosine + 2 L-methionine + 2 reduced [2Fe-2S]-[ferredoxin]. The protein operates within protein modification; protein lipoylation via endogenous pathway; protein N(6)-(lipoyl)lysine from octanoyl-[acyl-carrier-protein]: step 2/2. Catalyzes the radical-mediated insertion of two sulfur atoms into the C-6 and C-8 positions of the octanoyl moiety bound to the lipoyl domains of lipoate-dependent enzymes, thereby converting the octanoylated domains into lipoylated derivatives. This chain is Lipoyl synthase 1, found in Bradyrhizobium diazoefficiens (strain JCM 10833 / BCRC 13528 / IAM 13628 / NBRC 14792 / USDA 110).